The chain runs to 3432 residues: Genome polyprotein (3432 aa).

The interaction with host EXOC1 stretch occupies residues 2-15 (TKKPGGPGKNRAIN). Topologically, residues 2 to 109 (TKKPGGPGKN…RKQNKRGGNE (108 aa)) are cytoplasmic. Positions 37 to 72 (LLDGRGPVRFVLALITFFKFTALAPTKALLGRWKAV) are hydrophobic; homodimerization of capsid protein C. Residues 106–127 (GGNEGSIMWLASLAVVIACAGA) constitute a propeptide, ER anchor for the capsid protein C, removed in mature form by serine protease NS3. A helical transmembrane segment spans residues 110-130 (GSIMWLASLAVVIACAGAMKL). At 131-253 (SNFQGKLLMT…ATRYLMKTEN (123 aa)) the chain is on the extracellular side. N-linked (GlcNAc...) asparagine; by host glycosylation is present at Asn-142. Residues 254-274 (WIIRNPGYAFLAAVLGWMLGS) form a helical membrane-spanning segment. Residues 275-279 (NNGQR) are Cytoplasmic-facing. The helical transmembrane segment at 280-294 (VVFTILLLLVAPAYS) threads the bilayer. The Extracellular portion of the chain corresponds to 295-746 (FNCLGMGNRD…QVFGGAFRTL (452 aa)). Cystine bridges form between Cys-297–Cys-324, Cys-354–Cys-410, Cys-354–Cys-415, Cys-368–Cys-399, Cys-386–Cys-410, and Cys-386–Cys-415. The interval 392-405 (DRGWGNGCGLFGKG) is fusion peptide. N-linked (GlcNAc...) asparagine; by host glycosylation occurs at Asn-448. 2 disulfides stabilise this stretch: Cys-484–Cys-581 and Cys-598–Cys-629. A helical transmembrane segment spans residues 747–767 (FGGMSWITQGLMGALLLWMGV). At 768 to 773 (NARDRS) the chain is on the cytoplasmic side. Residues 774-794 (IALAFLATGGVLVFLATNVHA) form a helical membrane-spanning segment. Topologically, residues 795-1219 (DTGCAIDITR…AFAEANSGGD (425 aa)) are extracellular. 6 cysteine pairs are disulfide-bonded: Cys-798–Cys-809, Cys-849–Cys-937, Cys-973–Cys-1017, Cys-1074–Cys-1123, Cys-1085–Cys-1106, and Cys-1107–Cys-1110. 2 N-linked (GlcNAc...) asparagine; by host glycosylation sites follow: Asn-924 and Asn-1001. The chain crosses the membrane as a helical span at residues 1220–1240 (VLHLALIAVFKIQPAFLVMNM). The Cytoplasmic portion of the chain corresponds to 1241-1250 (LSTRWTNQEN). Residues 1251-1271 (VILVLGAAFFQLASVDLQIGV) form a helical membrane-spanning segment. A topological domain (lumenal) is located at residue His-1272. Residues 1273-1293 (GILNAAAIAWMIVRAITFPTT) form a helical membrane-spanning segment. At 1294 to 1309 (SSVTMPVLALLTPGMR) the chain is on the cytoplasmic side. The helical transmembrane segment at 1310–1330 (ALYLDTYRIILLVIGICSLLH) threads the bilayer. The Lumenal portion of the chain corresponds to 1331-1341 (ERKKTMAKKKG). A helical transmembrane segment spans residues 1342–1362 (AVLLGLALTSTGWFSPTTIAA). The Cytoplasmic segment spans residues 1363–1374 (GLMVCNPNKKRG). 2 interaction with human SPCS1 regions span residues 1374-1423 (GWPA…GKAT) and 1458-1505 (FHLI…TKRG). Residues 1375–1395 (WPATEFLSAVGLMFAIVGGLA) traverse the membrane as a helical segment. Residues 1396 to 1398 (ELD) are Lumenal-facing. The chain crosses the membrane as a helical span at residues 1399 to 1419 (IESMSIPFMLAGLMAVSYVVS). At 1420–1476 (GKATDMWLERAADISWEMDAAITGSSRRLDVKLDDDGDFHLIDDPGVPWKVWVLRMS) the chain is on the cytoplasmic side. Positions 1427-1466 (LERAADISWEMDAAITGSSRRLDVKLDDDGDFHLIDDPGV) are interacts with and activates NS3 protease. The segment at residues 1477 to 1497 (CIGLAALTPWAIVPAAFGYWL) is an intramembrane region (helical). Topologically, residues 1498–2173 (TLKTTKRGGV…RMALEELPDA (676 aa)) are cytoplasmic. The region spanning 1505-1682 (GGVFWDTPSP…DRQEEPVPEA (178 aa)) is the Peptidase S7 domain. Active-site charge relay system; for serine protease NS3 activity residues include His-1555, Asp-1579, and Ser-1639. The Helicase ATP-binding domain maps to 1685–1841 (PNMLRKRQMT…DSNAPIHDLQ (157 aa)). The interval 1689-1692 (RKRQ) is important for RNA-binding. ATP is bound at residue 1698–1705 (LHPGSGKT). The DEAH box signature appears at 1789-1792 (DEAH). One can recognise a Helicase C-terminal domain in the interval 1852 to 2017 (GYEWITEYAG…GLVAQLYGPE (166 aa)). Lys-1893 carries the post-translational modification N6-acetyllysine; by host. The disordered stretch occupies residues 1950–1972 (NPSPITSASAAQRRGRVGRNPNQ). Positions 2168–2172 (EELPD) are regulates the ATPase activity of NS3 helicase. A helical transmembrane segment spans residues 2174–2194 (LETITLIVAITVMTGGFFLLM). Residues 2195 to 2199 (MQRKG) are Lumenal-facing. Residues 2200–2220 (IGKMGLGALVLTLATFFLWAA) constitute an intramembrane region (helical). Residue Glu-2221 is a topological domain, lumenal. The helical transmembrane segment at 2222–2242 (VPGTKIAGTLLIALLLMVVLI) threads the bilayer. The Cytoplasmic portion of the chain corresponds to 2243 to 2257 (PEPEKQRSQTDNQLA). Residues 2258–2278 (VFLICVLTVVGVVAANEYGML) traverse the membrane as a helical segment. At 2279-2311 (EKTKADLKSMFGGKTQASGLTGLPSMALDLRPA) the chain is on the lumenal side. Positions 2312–2332 (TAWALYGGSTVVLTPLLKHLI) form an intramembrane region, helical. Residues 2333-2368 (TSEYVTTSLASINSQAGSLFVLPRGVPFTDLDLTVG) lie on the Lumenal side of the membrane. A helical membrane pass occupies residues 2369 to 2389 (LVFLGCWGQITLTTFLTAMVL). At 2390–2444 (ATLHYGYMLPGWQAEALRAAQRRTAAGIMKNAVVDGMVATDVPELERTTPLMQKK) the chain is on the cytoplasmic side. A helical transmembrane segment spans residues 2445–2465 (VGQVLLIGVSVAAFLVNPNVT). Residues 2466-2469 (TVRE) are Lumenal-facing. A helical membrane pass occupies residues 2470 to 2490 (AGVLVTAATLTLWDNGASAVW). Topologically, residues 2491-3432 (NSTTATGLCH…DVLIQEDRVI (942 aa)) are cytoplasmic. One can recognise an mRNA cap 0-1 NS5-type MT domain in the interval 2528-2793 (GRPGGRTLGE…DVNLGSGTRA (266 aa)). Ser-2583 serves as a coordination point for S-adenosyl-L-methionine. Residue Ser-2583 is modified to Phosphoserine. The For 2'-O-MTase activity role is filled by Lys-2588. S-adenosyl-L-methionine is bound by residues Gly-2613, Trp-2614, Thr-2631, Lys-2632, Asp-2658, and Val-2659. The active-site For 2'-O-MTase activity is the Asp-2673. Ile-2674 serves as a coordination point for S-adenosyl-L-methionine. Active-site for 2'-O-MTase activity residues include Lys-2709 and Glu-2745. S-adenosyl-L-methionine is bound at residue Tyr-2747. Zn(2+) contacts are provided by Glu-2967, His-2971, Cys-2976, and Cys-2979. A RdRp catalytic domain is found at 3057–3209 (GKMYADDTAG…KPLDDRFATA (153 aa)). The Zn(2+) site is built by His-3244, Cys-3260, and Cys-3379.

In the N-terminal section; belongs to the class I-like SAM-binding methyltransferase superfamily. mRNA cap 0-1 NS5-type methyltransferase family. In terms of assembly, homodimer. Interacts (via N-terminus) with host EXOC1 (via C-terminus); this interaction results in EXOC1 degradation through the proteasome degradation pathway. As to quaternary structure, forms heterodimers with envelope protein E in the endoplasmic reticulum and Golgi. Homodimer; in the endoplasmic reticulum and Golgi. Interacts with protein prM. Interacts with non-structural protein 1. Interacts with host HSPA5. In terms of assembly, homodimer; Homohexamer when secreted. Interacts with envelope protein E. NS1 interacts with NS4B. Interacts with host complement protein CFH; this interaction leads to the degradation of C3. As to quaternary structure, interacts (via N-terminus) with serine protease NS3. Forms a heterodimer with serine protease NS3. May form homooligomers. Interacts with human SPCS1. In terms of assembly, forms a heterodimer with NS2B. Interacts with non-structural protein 2A (via N-terminus). Interacts with NS4B. Interacts with unphosphorylated RNA-directed RNA polymerase NS5; this interaction stimulates RNA-directed RNA polymerase NS5 guanylyltransferase activity. Interacts with host ILF2. As to quaternary structure, interacts with serine protease NS3. Homodimer. Interacts with host STAT2; this interaction inhibits the phosphorylation of the latter, and, when all viral proteins are present (polyprotein), targets STAT2 for degradation. Interacts with serine protease NS3. It depends on Mn(2+) as a cofactor. Requires Mg(2+) as cofactor. Specific enzymatic cleavages in vivo yield mature proteins. Cleavages in the lumen of endoplasmic reticulum are performed by host signal peptidase, whereas cleavages in the cytoplasmic side are performed by serine protease NS3. Signal cleavage at the 2K-4B site requires a prior NS3 protease-mediated cleavage at the 4A-2K site. In terms of processing, cleaved in post-Golgi vesicles by a host furin, releasing the mature small envelope protein M, and peptide pr. This cleavage is incomplete as up to 30% of viral particles still carry uncleaved prM. Post-translationally, N-glycosylated. N-glycosylated. The excreted form is glycosylated and this is required for efficient secretion of the protein from infected cells. In terms of processing, acetylated by host KAT5. Acetylation modulates NS3 RNA-binding and unwinding activities and plays an important positive role for viral replication. Post-translationally, phosphorylated on serines residues. This phosphorylation may trigger NS5 nuclear localization.

The protein localises to the host endoplasmic reticulum membrane. It localises to the virion. The protein resides in the host nucleus. It is found in the host cytoplasm. Its subcellular location is the host perinuclear region. The protein localises to the secreted. It localises to the virion membrane. The protein resides in the host cell surface. The catalysed reaction is Selective hydrolysis of -Xaa-Xaa-|-Yaa- bonds in which each of the Xaa can be either Arg or Lys and Yaa can be either Ser or Ala.. It carries out the reaction RNA(n) + a ribonucleoside 5'-triphosphate = RNA(n+1) + diphosphate. It catalyses the reaction a ribonucleoside 5'-triphosphate + H2O = a ribonucleoside 5'-diphosphate + phosphate + H(+). The enzyme catalyses ATP + H2O = ADP + phosphate + H(+). The catalysed reaction is a 5'-end (5'-triphosphoguanosine)-ribonucleoside in mRNA + S-adenosyl-L-methionine = a 5'-end (N(7)-methyl 5'-triphosphoguanosine)-ribonucleoside in mRNA + S-adenosyl-L-homocysteine. It carries out the reaction a 5'-end (N(7)-methyl 5'-triphosphoguanosine)-ribonucleoside in mRNA + S-adenosyl-L-methionine = a 5'-end (N(7)-methyl 5'-triphosphoguanosine)-(2'-O-methyl-ribonucleoside) in mRNA + S-adenosyl-L-homocysteine + H(+). In terms of biological role, plays a role in virus budding by binding to the cell membrane and gathering the viral RNA into a nucleocapsid that forms the core of a mature virus particle. During virus entry, may induce genome penetration into the host cytoplasm after hemifusion induced by the surface proteins. Can migrate to the cell nucleus where it modulates host functions. Overcomes the anti-viral effects of host EXOC1 by sequestering and degrading the latter through the proteasome degradation pathway. Functionally, inhibits RNA silencing by interfering with host Dicer. Prevents premature fusion activity of envelope proteins in trans-Golgi by binding to envelope protein E at pH 6.0. After virion release in extracellular space, gets dissociated from E dimers. Its function is as follows. Acts as a chaperone for envelope protein E during intracellular virion assembly by masking and inactivating envelope protein E fusion peptide. prM is the only viral peptide matured by host furin in the trans-Golgi network probably to avoid catastrophic activation of the viral fusion activity in acidic Golgi compartment prior to virion release. prM-E cleavage is inefficient, and many virions are only partially matured. These uncleaved prM would play a role in immune evasion. In terms of biological role, may play a role in virus budding. Exerts cytotoxic effects by activating a mitochondrial apoptotic pathway through M ectodomain. May display a viroporin activity. Functionally, binds to host cell surface receptor and mediates fusion between viral and cellular membranes. Efficient virus attachment to cell is, at least in part, mediated by host HSPA5. Envelope protein is synthesized in the endoplasmic reticulum in the form of heterodimer with protein prM. They play a role in virion budding in the ER, and the newly formed immature particle is covered with 60 spikes composed of heterodimer between precursor prM and envelope protein E. The virion is transported to the Golgi apparatus where the low pH causes dissociation of PrM-E heterodimers and formation of E homodimers. prM-E cleavage is inefficient, and many virions are only partially matured. These uncleaved prM would play a role in immune evasion. Involved in immune evasion, pathogenesis and viral replication. Once cleaved off the polyprotein, is targeted to three destinations: the viral replication cycle, the plasma membrane and the extracellular compartment. Essential for viral replication. Required for formation of the replication complex and recruitment of other non-structural proteins to the ER-derived membrane structures. Excreted as a hexameric lipoparticle that plays a role against host immune response. Antagonizing the complement function. Binds to the host macrophages and dendritic cells. Inhibits signal transduction originating from Toll-like receptor 3 (TLR3). Its function is as follows. Component of the viral RNA replication complex that functions in virion assembly and antagonizes the host alpha/beta interferon antiviral response. In terms of biological role, required cofactor for the serine protease function of NS3. May have membrane-destabilizing activity and form viroporins. Functionally, displays three enzymatic activities: serine protease, NTPase and RNA helicase. NS3 serine protease, in association with NS2B, performs its autocleavage and cleaves the polyprotein at dibasic sites in the cytoplasm: C-prM, NS2A-NS2B, NS2B-NS3, NS3-NS4A, NS4A-2K and NS4B-NS5. NS3 RNA helicase binds RNA and unwinds dsRNA in the 3' to 5' direction. Regulates the ATPase activity of the NS3 helicase activity. NS4A allows NS3 helicase to conserve energy during unwinding. Its function is as follows. Functions as a signal peptide for NS4B and is required for the interferon antagonism activity of the latter. In terms of biological role, induces the formation of ER-derived membrane vesicles where the viral replication takes place. Inhibits interferon (IFN)-induced host STAT1 phosphorylation and nuclear translocation, thereby preventing the establishment of cellular antiviral state by blocking the IFN-alpha/beta pathway. Inhibits STAT2 translocation in the nucleus after IFN-alpha treatment. Functionally, replicates the viral (+) and (-) RNA genome. Performs the capping of genomes in the cytoplasm. NS5 methylates viral RNA cap at guanine N-7 and ribose 2'-O positions. Besides its role in RNA genome replication, also prevents the establishment of cellular antiviral state by blocking the interferon-alpha/beta (IFN-alpha/beta) signaling pathway. Inhibits host TYK2 and STAT2 phosphorylation, thereby preventing activation of JAK-STAT signaling pathway. The chain is Genome polyprotein from Japanese encephalitis virus (strain SA-14) (JEV).